A 215-amino-acid chain; its full sequence is Imidazole glycerol phosphate synthase subunit HisH (215 aa).

The Glutamine amidotransferase type-1 domain occupies 3–215; that stretch reads TAVVFDYGFG…QLLKNWIATL (213 aa). Cys81 (nucleophile) is an active-site residue. Catalysis depends on residues His196 and Glu198.

In terms of assembly, heterodimer of HisH and HisF.

The protein localises to the cytoplasm. It catalyses the reaction 5-[(5-phospho-1-deoxy-D-ribulos-1-ylimino)methylamino]-1-(5-phospho-beta-D-ribosyl)imidazole-4-carboxamide + L-glutamine = D-erythro-1-(imidazol-4-yl)glycerol 3-phosphate + 5-amino-1-(5-phospho-beta-D-ribosyl)imidazole-4-carboxamide + L-glutamate + H(+). The enzyme catalyses L-glutamine + H2O = L-glutamate + NH4(+). It functions in the pathway amino-acid biosynthesis; L-histidine biosynthesis; L-histidine from 5-phospho-alpha-D-ribose 1-diphosphate: step 5/9. In terms of biological role, IGPS catalyzes the conversion of PRFAR and glutamine to IGP, AICAR and glutamate. The HisH subunit catalyzes the hydrolysis of glutamine to glutamate and ammonia as part of the synthesis of IGP and AICAR. The resulting ammonia molecule is channeled to the active site of HisF. The sequence is that of Imidazole glycerol phosphate synthase subunit HisH from Bifidobacterium longum (strain NCC 2705).